Consider the following 490-residue polypeptide: Nicotinate phosphoribosyltransferase (490 aa).

H206 is subject to Phosphohistidine.

This sequence belongs to the NAPRTase family. In terms of processing, transiently phosphorylated on a His residue during the reaction cycle. Phosphorylation strongly increases the affinity for substrates and increases the rate of nicotinate D-ribonucleotide production. Dephosphorylation regenerates the low-affinity form of the enzyme, leading to product release.

It catalyses the reaction nicotinate + 5-phospho-alpha-D-ribose 1-diphosphate + ATP + H2O = nicotinate beta-D-ribonucleotide + ADP + phosphate + diphosphate. It functions in the pathway cofactor biosynthesis; NAD(+) biosynthesis; nicotinate D-ribonucleotide from nicotinate: step 1/1. In terms of biological role, catalyzes the synthesis of beta-nicotinate D-ribonucleotide from nicotinate and 5-phospho-D-ribose 1-phosphate at the expense of ATP. This is Nicotinate phosphoribosyltransferase (pncB) from Bacillus subtilis (strain 168).